The following is a 368-amino-acid chain: Agmatine deiminase (368 aa).

Catalysis depends on cysteine 357, which acts as the Amidino-cysteine intermediate.

The protein belongs to the agmatine deiminase family. In terms of assembly, homodimer.

The catalysed reaction is agmatine + H2O = N-carbamoylputrescine + NH4(+). Its pathway is amine and polyamine biosynthesis; putrescine biosynthesis via agmatine pathway; N-carbamoylputrescine from agmatine: step 1/1. Its function is as follows. Mediates the hydrolysis of agmatine into N-carbamoylputrescine in the arginine decarboxylase (ADC) pathway of putrescine biosynthesis, a basic polyamine. The chain is Agmatine deiminase from Pseudomonas aeruginosa (strain LESB58).